The primary structure comprises 88 residues: Phosphocarrier protein HPr (88 aa).

The 88-residue stretch at 1–88 (MEQKSYVIID…DILSKEGLTK (88 aa)) folds into the HPr domain. Catalysis depends on His-15, which acts as the Pros-phosphohistidine intermediate. The residue at position 46 (Ser-46) is a Phosphoserine; by HPrK/P.

Belongs to the HPr family.

The protein localises to the cytoplasm. Phosphorylation on Ser-46 inhibits the phosphoryl transfer from enzyme I to HPr. In terms of biological role, general (non sugar-specific) component of the phosphoenolpyruvate-dependent sugar phosphotransferase system (sugar PTS). This major carbohydrate active-transport system catalyzes the phosphorylation of incoming sugar substrates concomitantly with their translocation across the cell membrane. The phosphoryl group from phosphoenolpyruvate (PEP) is transferred to the phosphoryl carrier protein HPr by enzyme I. Phospho-HPr then transfers it to the PTS EIIA domain. The sequence is that of Phosphocarrier protein HPr (ptsH) from Staphylococcus xylosus.